The primary structure comprises 235 residues: Lipoprotein-releasing system ATP-binding protein LolD (235 aa).

One can recognise an ABC transporter domain in the interval 7–234; the sequence is LQCTNLSKRY…QQELTLMGAR (228 aa). 43–50 contacts ATP; that stretch reads GSSGSGKS.

The protein belongs to the ABC transporter superfamily. Lipoprotein translocase (TC 3.A.1.125) family. As to quaternary structure, the complex is composed of two ATP-binding proteins (LolD) and two transmembrane proteins (LolC and LolE).

It is found in the cell inner membrane. Functionally, part of the ABC transporter complex LolCDE involved in the translocation of mature outer membrane-directed lipoproteins, from the inner membrane to the periplasmic chaperone, LolA. Responsible for the formation of the LolA-lipoprotein complex in an ATP-dependent manner. The protein is Lipoprotein-releasing system ATP-binding protein LolD of Pectobacterium atrosepticum (strain SCRI 1043 / ATCC BAA-672) (Erwinia carotovora subsp. atroseptica).